The chain runs to 266 residues: GTP cyclohydrolase MptA (266 aa).

It belongs to the GTP cyclohydrolase IV family. As to quaternary structure, homodimer. Fe(2+) serves as cofactor.

It carries out the reaction GTP + H2O = 7,8-dihydroneopterin 2',3'-cyclic phosphate + formate + diphosphate + H(+). It participates in cofactor biosynthesis; 5,6,7,8-tetrahydromethanopterin biosynthesis. Its function is as follows. Converts GTP to 7,8-dihydro-D-neopterin 2',3'-cyclic phosphate, the first intermediate in the biosynthesis of coenzyme methanopterin. This Pyrococcus abyssi (strain GE5 / Orsay) protein is GTP cyclohydrolase MptA.